The following is a 577-amino-acid chain: Protein NRT1/ PTR FAMILY 6.2 (577 aa).

Helical transmembrane passes span 28–48 (WITA…TMGI), 74–94 (FMGT…SFLG), 96–116 (FKTI…LAVA), 134–154 (IPAT…IALG), 183–203 (FFFN…VTVL), 214–234 (WAYG…LCGT), 332–352 (LLPI…MITF), 369–389 (IPAG…LAVY), 409–429 (LQRI…AALV), 447–467 (ISVF…AFIY), 488–508 (GLFL…VSIV), and 535–555 (WLLV…ALWF).

Belongs to the major facilitator superfamily. Proton-dependent oligopeptide transporter (POT/PTR) (TC 2.A.17) family. In terms of tissue distribution, expressed in shoots, leaves, flowers and siliques. Expressed in leaf petiole.

Its subcellular location is the membrane. Functionally, low-affinity proton-dependent nitrate transporter. Not involved in dipeptides transport. The protein is Protein NRT1/ PTR FAMILY 6.2 (NPF6.2) of Arabidopsis thaliana (Mouse-ear cress).